A 107-amino-acid polypeptide reads, in one-letter code: Bombesin (107 aa).

Positions 1–26 are cleaved as a signal peptide; the sequence is MSAIPLNRILPLGFLLIFSFISLSSC. Positions 27-41 are excised as a propeptide; the sequence is MEFVEDPNNQGGLNL. Glutamine 42 carries the post-translational modification Pyrrolidone carboxylic acid. A Methionine amide modification is found at methionine 55. Positions 56-107 are excised as a propeptide; that stretch reads GKKSLQDTDFEEMESFAKRNVENMKAESERELRHAQLVVRNILEQYLKNMQN.

As to expression, expressed by the skin glands.

The protein resides in the secreted. Functionally, stimulates smooth muscle contraction. Role in induction of hypothermia, stimulation of DNA replication and release of many gastrointestinal hormones. Possesses insulin-releasing activity. The protein is Bombesin of Bombina variegata (Yellow-bellied toad).